We begin with the raw amino-acid sequence, 272 residues long: Ethanolamine ammonia-lyase small subunit (272 aa).

Residues Val161, Glu182, and Cys211 each contribute to the adenosylcob(III)alamin site.

Belongs to the EutC family. The basic unit is a heterodimer which dimerizes to form tetramers. The heterotetramers trimerize; 6 large subunits form a core ring with 6 small subunits projecting outwards. The cofactor is adenosylcob(III)alamin.

It localises to the bacterial microcompartment. The enzyme catalyses ethanolamine = acetaldehyde + NH4(+). Its pathway is amine and polyamine degradation; ethanolamine degradation. In terms of biological role, catalyzes the deamination of various vicinal amino-alcohols to oxo compounds. Allows this organism to utilize ethanolamine as the sole source of nitrogen and carbon in the presence of external vitamin B12. The polypeptide is Ethanolamine ammonia-lyase small subunit (Pseudomonas putida (strain W619)).